The sequence spans 454 residues: tRNA-2-methylthio-N(6)-dimethylallyladenosine synthase (454 aa).

An MTTase N-terminal domain is found at 11-128 (KKLYIQTHGC…LPEMIETPRE (118 aa)). Residues Cys-20, Cys-57, Cys-91, Cys-165, Cys-169, and Cys-172 each contribute to the [4Fe-4S] cluster site. Residues 151-382 (EADGATAFVS…QTRIIQQAQE (232 aa)) enclose the Radical SAM core domain. Positions 385–449 (RRMVGNTERV…PNSLRGVLLG (65 aa)) constitute a TRAM domain.

The protein belongs to the methylthiotransferase family. MiaB subfamily. As to quaternary structure, monomer. Requires [4Fe-4S] cluster as cofactor.

It is found in the cytoplasm. It catalyses the reaction N(6)-dimethylallyladenosine(37) in tRNA + (sulfur carrier)-SH + AH2 + 2 S-adenosyl-L-methionine = 2-methylsulfanyl-N(6)-dimethylallyladenosine(37) in tRNA + (sulfur carrier)-H + 5'-deoxyadenosine + L-methionine + A + S-adenosyl-L-homocysteine + 2 H(+). In terms of biological role, catalyzes the methylthiolation of N6-(dimethylallyl)adenosine (i(6)A), leading to the formation of 2-methylthio-N6-(dimethylallyl)adenosine (ms(2)i(6)A) at position 37 in tRNAs that read codons beginning with uridine. This Saccharophagus degradans (strain 2-40 / ATCC 43961 / DSM 17024) protein is tRNA-2-methylthio-N(6)-dimethylallyladenosine synthase.